Reading from the N-terminus, the 81-residue chain is Small ribosomal subunit protein bS16 (81 aa).

The protein belongs to the bacterial ribosomal protein bS16 family.

This is Small ribosomal subunit protein bS16 from Lachnoclostridium phytofermentans (strain ATCC 700394 / DSM 18823 / ISDg) (Clostridium phytofermentans).